We begin with the raw amino-acid sequence, 336 residues long: DNA-directed RNA polymerase subunit alpha (336 aa).

Residues 1–226 (MLIAQRPTLS…ELFGLARELN (226 aa)) are alpha N-terminal domain (alpha-NTD). The alpha C-terminal domain (alpha-CTD) stretch occupies residues 241–336 (AALAADMALP…DDAAFSDDEL (96 aa)).

It belongs to the RNA polymerase alpha chain family. In terms of assembly, homodimer. The RNAP catalytic core consists of 2 alpha, 1 beta, 1 beta' and 1 omega subunit. When a sigma factor is associated with the core the holoenzyme is formed, which can initiate transcription.

The enzyme catalyses RNA(n) + a ribonucleoside 5'-triphosphate = RNA(n+1) + diphosphate. In terms of biological role, DNA-dependent RNA polymerase catalyzes the transcription of DNA into RNA using the four ribonucleoside triphosphates as substrates. The sequence is that of DNA-directed RNA polymerase subunit alpha from Paenarthrobacter aurescens (strain TC1).